The following is a 294-amino-acid chain: Acetylglutamate kinase (294 aa).

Substrate is bound by residues 64-65 (GG), Arg86, and Asn189.

The protein belongs to the acetylglutamate kinase family. ArgB subfamily.

It is found in the cytoplasm. It carries out the reaction N-acetyl-L-glutamate + ATP = N-acetyl-L-glutamyl 5-phosphate + ADP. The protein operates within amino-acid biosynthesis; L-arginine biosynthesis; N(2)-acetyl-L-ornithine from L-glutamate: step 2/4. Its function is as follows. Catalyzes the ATP-dependent phosphorylation of N-acetyl-L-glutamate. In Carboxydothermus hydrogenoformans (strain ATCC BAA-161 / DSM 6008 / Z-2901), this protein is Acetylglutamate kinase.